Reading from the N-terminus, the 72-residue chain is MQSNFIFATLLVLLSLLTFTYASGSSSMTSSSMPMFGGAIVAAFAFAIFSRLAQNFAPRAIFSLLPYHSVSC.

A signal peptide spans 1 to 22 (MQSNFIFATLLVLLSLLTFTYA). Residues 23-28 (SGSSSM) are Extracellular-facing. The helical transmembrane segment at 29–49 (TSSSMPMFGGAIVAAFAFAIF) threads the bilayer. Residues 50-72 (SRLAQNFAPRAIFSLLPYHSVSC) are Cytoplasmic-facing.

It localises to the membrane. This is an uncharacterized protein from Dictyostelium discoideum (Social amoeba).